Reading from the N-terminus, the 229-residue chain is UPF0758 protein Moth_0536 (229 aa).

The MPN domain maps to 107-229; that stretch reads VIRNPRDVAG…FTSLKERNLL (123 aa). Residues H178, H180, and D191 each coordinate Zn(2+). Positions 178–191 match the JAMM motif motif; the sequence is HNHPSGDPTPSQED.

This sequence belongs to the UPF0758 family.

This is UPF0758 protein Moth_0536 from Moorella thermoacetica (strain ATCC 39073 / JCM 9320).